A 934-amino-acid chain; its full sequence is Serine/threonine-protein kinase PknD (934 aa).

Residues 4 to 296 (YELIRLIGKG…ELRQALQPYL (293 aa)) form the Protein kinase domain. Residues 10 to 18 (IGKGGMGEV) and lysine 33 contribute to the ATP site. The active-site Proton acceptor is the aspartate 138.

The protein belongs to the protein kinase superfamily. Ser/Thr protein kinase family. As to quaternary structure, interacts with Pkn1. In terms of processing, autophosphorylated on serine and threonine residues.

It catalyses the reaction L-seryl-[protein] + ATP = O-phospho-L-seryl-[protein] + ADP + H(+). The catalysed reaction is L-threonyl-[protein] + ATP = O-phospho-L-threonyl-[protein] + ADP + H(+). In terms of biological role, together with the serine/threonine kinase Pkn1, may play a role in the specific interactions with host proteins during intracellular growth. Autophosphorylates and also phosphorylates Pkn1. This is Serine/threonine-protein kinase PknD from Chlamydia trachomatis serovar D (strain ATCC VR-885 / DSM 19411 / UW-3/Cx).